Here is a 336-residue protein sequence, read N- to C-terminus: Protein FPV127 (336 aa).

Residues 1–22 (MGGGLVLPTRDPPKEQDTSETA) form a disordered region.

The protein belongs to the poxviruses A16/G9/J5 family.

The protein is Protein FPV127 of Vertebrata (FPV).